Reading from the N-terminus, the 59-residue chain is Arabinogalactan protein 13 (59 aa).

Residues 1–27 (MEAMKMRLFVAVLVAAMAFSAVQQAAA) form the signal peptide. 3 positions are modified to 4-hydroxyproline: proline 31, proline 33, and proline 35. O-linked (Ara...) hydroxyproline glycosylation is found at proline 31, proline 33, and proline 35. The GPI-anchor amidated serine moiety is linked to residue serine 37. Residues 38-59 (DASLAIPAFFASVATLAFGFLF) constitute a propeptide, removed in mature form.

It belongs to the AG-peptide AGP family. Post-translationally, contains 4-hydroxyproline; hydroxylated on Pro-31, Pro-33 and Pro-35. O-glycosylated on hydroxyprolines; noncontiguous hydroxylproline residues are glycosylated with arabinogalactan.

The protein resides in the cell membrane. Functionally, proteoglycan that seems to be implicated in diverse developmental roles such as differentiation, cell-cell recognition, embryogenesis and programmed cell death. This chain is Arabinogalactan protein 13, found in Arabidopsis thaliana (Mouse-ear cress).